The following is a 407-amino-acid chain: tRNA N6-adenosine threonylcarbamoyltransferase, mitochondrial (407 aa).

A mitochondrion-targeting transit peptide spans 1–30; the sequence is MISIKGTGRFLLDNYRIWQRRAFNRPIQLR. A divalent metal cation is bound by residues histidine 145 and histidine 149. Residues 170–174, aspartate 203, alanine 217, glutamate 221, 328–329, and serine 360 contribute to the substrate site; these read LVSGG and SN. Aspartate 361 lines the a divalent metal cation pocket.

The protein belongs to the KAE1 / TsaD family. As to quaternary structure, homodimer. A divalent metal cation is required as a cofactor.

Its subcellular location is the mitochondrion. The catalysed reaction is L-threonylcarbamoyladenylate + adenosine(37) in tRNA = N(6)-L-threonylcarbamoyladenosine(37) in tRNA + AMP + H(+). Functionally, required for the formation of a threonylcarbamoyl group on adenosine at position 37 (t(6)A37) in mitochondrial tRNAs that read codons beginning with adenine. Probably involved in the transfer of the threonylcarbamoyl moiety of threonylcarbamoyl-AMP (TC-AMP) to the N6 group of A37. Involved in mitochondrial genome maintenance. The protein is tRNA N6-adenosine threonylcarbamoyltransferase, mitochondrial (QRI7) of Saccharomyces cerevisiae (strain ATCC 204508 / S288c) (Baker's yeast).